The chain runs to 156 residues: Arginine repressor (156 aa).

The protein belongs to the ArgR family.

It is found in the cytoplasm. It participates in amino-acid biosynthesis; L-arginine biosynthesis [regulation]. In terms of biological role, regulates arginine biosynthesis genes. This is Arginine repressor from Shewanella putrefaciens (strain CN-32 / ATCC BAA-453).